Here is a 321-residue protein sequence, read N- to C-terminus: Ribose-phosphate pyrophosphokinase (321 aa).

ATP contacts are provided by residues 44–46 and 103–104; these read DGE and RQ. Residues histidine 137 and aspartate 179 each contribute to the Mg(2+) site. Lysine 202 is an active-site residue. D-ribose 5-phosphate is bound by residues arginine 204, aspartate 228, and 232 to 236; that span reads DTAGT.

This sequence belongs to the ribose-phosphate pyrophosphokinase family. Class I subfamily. As to quaternary structure, homohexamer. It depends on Mg(2+) as a cofactor.

The protein localises to the cytoplasm. The catalysed reaction is D-ribose 5-phosphate + ATP = 5-phospho-alpha-D-ribose 1-diphosphate + AMP + H(+). The protein operates within metabolic intermediate biosynthesis; 5-phospho-alpha-D-ribose 1-diphosphate biosynthesis; 5-phospho-alpha-D-ribose 1-diphosphate from D-ribose 5-phosphate (route I): step 1/1. Functionally, involved in the biosynthesis of the central metabolite phospho-alpha-D-ribosyl-1-pyrophosphate (PRPP) via the transfer of pyrophosphoryl group from ATP to 1-hydroxyl of ribose-5-phosphate (Rib-5-P). The sequence is that of Ribose-phosphate pyrophosphokinase from Staphylococcus aureus (strain Mu50 / ATCC 700699).